We begin with the raw amino-acid sequence, 335 residues long: 2,4-dienoyl-CoA reductase [(3E)-enoyl-CoA-producing], mitochondrial (335 aa).

Residues 1 to 34 constitute a mitochondrion transit peptide; the sequence is MKLPARVFFTLGSRLPCGLAPRRFFSYGTKILYQ. N6-acetyllysine; alternate is present on residues K42 and K49. 2 positions are modified to N6-succinyllysine; alternate: K42 and K49. 66–71 is an NADP(+) binding site; that stretch reads GGGTGL. A Phosphothreonine modification is found at T69. The residue at position 73 (K73) is an N6-succinyllysine. Residue R91 coordinates NADP(+). R91 serves as a coordination point for substrate. Residue K97 is modified to N6-acetyllysine; alternate. K97 bears the N6-succinyllysine; alternate mark. D117 contacts NADP(+). Residues R119, F149, and S157 each coordinate substrate. The active-site Proton acceptor is the Y199. An NADP(+)-binding site is contributed by K214. K230 bears the N6-acetyllysine mark. 240-243 is an NADP(+) binding site; it reads PGPI. An N6-acetyllysine; alternate modification is found at K244. K244 is subject to N6-succinyllysine; alternate. R251 contacts substrate. Residues K260 and K319 each carry the N6-acetyllysine; alternate modification. N6-succinyllysine; alternate occurs at positions 260 and 319.

It belongs to the short-chain dehydrogenases/reductases (SDR) family. 2,4-dienoyl-CoA reductase subfamily. In terms of assembly, homotetramer. In terms of tissue distribution, heart = liver = pancreas &gt; kidney &gt;&gt; skeletal muscle = lung.

The protein resides in the mitochondrion. It carries out the reaction a (2E,4E)-dienoyl-CoA + NADPH + H(+) = a 4,5-saturated-(3E)-enoyl-CoA + NADP(+). The enzyme catalyses a (2E,4Z)-dienoyl-CoA + NADPH + H(+) = a 4,5-saturated-(3E)-enoyl-CoA + NADP(+). The catalysed reaction is (2E,4E)-hexadienoyl-CoA + NADPH + H(+) = (3E)-hexenoyl-CoA + NADP(+). Auxiliary enzyme of beta-oxidation. It participates in the metabolism of unsaturated fatty enoyl-CoA esters having double bonds in both even- and odd-numbered positions in mitochondria. Catalyzes the NADP-dependent reduction of 2,4-dienoyl-CoA to yield trans-3-enoyl-CoA. This chain is 2,4-dienoyl-CoA reductase [(3E)-enoyl-CoA-producing], mitochondrial (DECR1), found in Homo sapiens (Human).